A 204-amino-acid chain; its full sequence is Crossover junction endodeoxyribonuclease RuvC (204 aa).

Active-site residues include Asp7, Glu68, and Asp141. 3 residues coordinate Mg(2+): Asp7, Glu68, and Asp141. Residues 164-204 (QAVAAHRTSGASRTPGAAGTPGPSRTPGAPGTSRTLKGRTA) form a disordered region.

Belongs to the RuvC family. In terms of assembly, homodimer which binds Holliday junction (HJ) DNA. The HJ becomes 2-fold symmetrical on binding to RuvC with unstacked arms; it has a different conformation from HJ DNA in complex with RuvA. In the full resolvosome a probable DNA-RuvA(4)-RuvB(12)-RuvC(2) complex forms which resolves the HJ. It depends on Mg(2+) as a cofactor.

The protein localises to the cytoplasm. The enzyme catalyses Endonucleolytic cleavage at a junction such as a reciprocal single-stranded crossover between two homologous DNA duplexes (Holliday junction).. Functionally, the RuvA-RuvB-RuvC complex processes Holliday junction (HJ) DNA during genetic recombination and DNA repair. Endonuclease that resolves HJ intermediates. Cleaves cruciform DNA by making single-stranded nicks across the HJ at symmetrical positions within the homologous arms, yielding a 5'-phosphate and a 3'-hydroxyl group; requires a central core of homology in the junction. The consensus cleavage sequence is 5'-(A/T)TT(C/G)-3'. Cleavage occurs on the 3'-side of the TT dinucleotide at the point of strand exchange. HJ branch migration catalyzed by RuvA-RuvB allows RuvC to scan DNA until it finds its consensus sequence, where it cleaves and resolves the cruciform DNA. This is Crossover junction endodeoxyribonuclease RuvC from Streptomyces griseus subsp. griseus (strain JCM 4626 / CBS 651.72 / NBRC 13350 / KCC S-0626 / ISP 5235).